The sequence spans 408 residues: Neutral cholesterol ester hydrolase 1 (408 aa).

Residues 1 to 4 are Cytoplasmic-facing; it reads MRSS. A helical; Signal-anchor for type II membrane protein transmembrane segment spans residues 5–25; the sequence is CVLLTALLALAAYYIYIPLPS. The Lumenal segment spans residues 26–408; the sequence is SVSDPWKLML…SYIKWLDQNL (383 aa). The Involved in the stabilization of the negatively charged intermediate by the formation of the oxyanion hole signature appears at 113–115; sequence HGG. Ser191 is a catalytic residue. 2 N-linked (GlcNAc...) asparagine glycosylation sites follow: Asn270 and Asn287. Catalysis depends on residues Asp348 and His378. Asn389 carries an N-linked (GlcNAc...) asparagine glycan.

This sequence belongs to the 'GDXG' lipolytic enzyme family. Post-translationally, N-glycosylated.

The protein resides in the cell membrane. It is found in the microsome. It carries out the reaction a 1-O-alkyl-2-acetyl-sn-glycerol + H2O = a 1-O-alkyl-sn-glycerol + acetate + H(+). It catalyses the reaction 1-O-hexadecyl-2-acetyl-sn-glycerol + H2O = 1-O-hexadecyl-sn-glycerol + acetate + H(+). The enzyme catalyses a cholesterol ester + H2O = cholesterol + a fatty acid + H(+). The catalysed reaction is cholesteryl (9Z-octadecenoate) + H2O = cholesterol + (9Z)-octadecenoate + H(+). Functionally, hydrolyzes 2-acetyl monoalkylglycerol ether (1-O-alkyl-2-acetyl-sn-glycerol), the penultimate precursor of the pathway for de novo synthesis of platelet-activating factor. May be responsible for the hydrolysis of cholesterol esters (such as cholesteryl (9Z-octadecenoate)) in macrophages. Also involved in organ detoxification by hydrolyzing exogenous organophosphorus compounds. In Bos taurus (Bovine), this protein is Neutral cholesterol ester hydrolase 1 (NCEH1).